A 144-amino-acid chain; its full sequence is Large ribosomal subunit protein uL15 (144 aa).

The disordered stretch occupies residues 1-49 (MKLNTLSPAAGAKSAAKRVGRGIGSGLGKTAGRGHKGQKSRSGGGVRVG). Residues 21–31 (RGIGSGLGKTA) show a composition bias toward gly residues.

Belongs to the universal ribosomal protein uL15 family. In terms of assembly, part of the 50S ribosomal subunit.

In terms of biological role, binds to the 23S rRNA. This chain is Large ribosomal subunit protein uL15, found in Shewanella loihica (strain ATCC BAA-1088 / PV-4).